The following is a 380-amino-acid chain: Cytochrome b (380 aa).

The next 4 membrane-spanning stretches (helical) occupy residues 33-53, 77-98, 113-133, and 178-198; these read FGSL…FLAM, WLLR…YLHI, WNIG…GYVL, and FFTF…LHLL. Heme b-binding residues include histidine 83 and histidine 97. The heme b site is built by histidine 182 and histidine 196. Histidine 201 lines the a ubiquinone pocket. The next 4 helical transmembrane spans lie at 226 to 246, 288 to 308, 320 to 340, and 347 to 367; these read YKDL…ALLN, LGGV…PTLH, SSQT…WIGG, and FIII…FFIP.

Belongs to the cytochrome b family. In terms of assembly, the cytochrome bc1 complex contains 3 respiratory subunits (MT-CYB, CYC1 and UQCRFS1), 2 core proteins (UQCRC1 and UQCRC2) and probably 6 low-molecular weight proteins. It depends on heme b as a cofactor.

The protein localises to the mitochondrion inner membrane. In terms of biological role, component of the ubiquinol-cytochrome c reductase complex (complex III or cytochrome b-c1 complex) that is part of the mitochondrial respiratory chain. The b-c1 complex mediates electron transfer from ubiquinol to cytochrome c. Contributes to the generation of a proton gradient across the mitochondrial membrane that is then used for ATP synthesis. In Lepisosteus oculatus (Spotted gar), this protein is Cytochrome b (mt-cyb).